Consider the following 1571-residue polypeptide: MYHHEDDTNSDMNSDDDMSRSGRETPPPRPSHAFGSERDLERRGRSRDVEPRDRWPYTRNPRSRLPQRDLSLPVMSRPHFGLDRDDDRRSMDYESRSQDAESYQNVVELKEDKKPQNPIQDNLENYRKLLSLGVQLAEDDRHSHMTQGHSSRSKRTAYPSTSRGLKPMPEAKKPSHRRGICEDESSHGVIMEKFIKDVARNPKSGRARELNERPPPRFPRPNDNWKDSSSSRRESVIQERGYEGSAFRGGFRFNADLASRSRALERKRRYHFDSDERGSGHEHKSCVRKKPFECGAEMRQAMSMGNLNSPSFSESQSIDFGANPYVCDECGRQFSVISEFVEHQIMHTRENLYEYGESFIHSVAVNEVQKGQGGGKRFECKECGETFSRSAALAEHRQIHAREYLAECRDQEDEETIMPSPTFSELQKMYGKDKFYECKVCKETFLHSSALIEHQKIHGRGNSDDRDNERERERDRLRARAREQRERERERERERELGEPFLTCPNFNEFRKMYRKDKIYECKVCGESFLHLSSLREHQKIHTRGNPFENKSRMCEETFVPSQSLRRRQKTYREKLFDFNNARDALMGNSDSSEHQKNRSRRNFFEGRGFEKPFVESQKSHTITRPPENKDDDKPFTISVNPNDKLKFPIMENGSQGKSYERSVIHSLGSAEAQKSHGGLGFSKPRPVAESSTQSSSSIYYPRAHSGGNTYEGKEYKDSIIHSLPAPRPLKRHRANDHIQCDEGGESSIYIPDIINKGRKIPAREDAYEGSSSSNYHTPNVSRAEPPSLSGESHDSKQDVTFSVPSSSVREHQKARAKKKYIEPRNNETSVIHSLPFGELLAGHRRAKFFECQECGEAFARRSELIEHQKIHDRERPSGSRHYERSVIRSLAPSDPQTSYAQERFIQEQVRKFRAFGQRSTTSNNLSVQKIYAQETFNAEEPHDKETHGQKIHDKEPYGKEPSGKEPHGDEPQDKEPLDQEMRSEEPHDDKPHGQEPHDDKPHGQEPHDDKPHGQEPHGDEPHGQEPHGDEPHDKEPIDQEMRSEEPHSEESHGDEPHGEESHGQEKVEDATIQASVSEEHQKDDAGDAIYECQDCGLGFTDLNDLTSHQDTHSRKALVDSREYAHSEVHAHSVSEFEKKCSGEKLYECPKCGESFIHSSLLFEHQRVHEQDQLYSVKACDDAFIALLPVRPRRNCTVERNPAVSGSAIRCRQCGQGFIHSSALNEHMRQHRDNEIMEQSELSDEIFIQGLALTEYQGSETEEKLFECTICGECFFTAKQLGDHHTKVHKDEPYEYGPSYTHASFLTEPLRKHIPLYECKDCGQSFLDDTVIAERMVFHPEREGGSEIVAATAQEVEANVLIPQEVLRIQGSNAEAAEPEVEAAEPEVEAAEPEVEAAEPNGEAEGPDGEAAEPDGEAEQPNGEAEQPNGDADEPDGAGIEDPEERADEPEEDVEEPEGDADEPDGADIEDPEEEGEDQEIEVEEPYYNCHECAETFASSSAFGEHLKSHASVIIFEPANAPGECSGYIERASTSAGGAEQADDKYFKCDVCGQLFNDRLSLARHQNSHTG.

Disordered stretches follow at residues 1 to 120 (MYHH…NPIQ) and 137 to 241 (AEDD…QERG). Basic and acidic residues-rich tracts occupy residues 35 to 56 (GSER…DRWP), 80 to 99 (FGLD…RSQD), 169 to 186 (PEAK…DESS), 193 to 215 (KFIK…ERPP), and 223 to 241 (DNWK…QERG). A 10 X 5 AA repeat of P-H-X-X-E region spans residues 199–265 (ARNPKSGRAR…DLASRSRALE (67 aa)). The interval 199–265 (ARNPKSGRAR…DLASRSRALE (67 aa)) is 3 X 5 AA repeat of P-H-D-D-K. 4 consecutive C2H2-type zinc fingers follow at residues 325 to 347 (YVCD…QIMH), 378 to 400 (FECK…RQIH), 436 to 458 (YECK…QKIH), and 520 to 542 (YECK…QKIH). The segment at 456–495 (KIHGRGNSDDRDNERERERDRLRARAREQRERERERERER) is disordered. 3 disordered regions span residues 585–649 (ALMG…LKFP), 672–713 (EAQK…TYEG), and 764–820 (REDA…AKKK). Basic and acidic residues predominate over residues 592 to 614 (SSEHQKNRSRRNFFEGRGFEKPF). Composition is skewed to polar residues over residues 770 to 781 (GSSSSNYHTPNV) and 799 to 808 (DVTFSVPSSS). Positions 809 to 820 (VREHQKARAKKK) are enriched in basic and acidic residues. The C2H2-type 5 zinc finger occupies 850 to 872 (FECQECGEAFARRSELIEHQKIH). Residues 937–1070 (FNAEEPHDKE…ESHGQEKVED (134 aa)) are disordered. Residues 940-1070 (EEPHDKETHG…ESHGQEKVED (131 aa)) are compositionally biased toward basic and acidic residues. A run of 13 repeats spans residues 942-946 (PHDKE), 967-971 (PHGDE), 987-991 (PHDDK), 992-996 (PHGQE), 997-1001 (PHDDK), 1002-1006 (PHGQE), 1007-1011 (PHDDK), 1012-1016 (PHGQE), 1017-1021 (PHGDE), 1022-1026 (PHGQE), 1027-1031 (PHGDE), 1032-1036 (PHDKE), and 1047-1051 (PHSEE). 4 consecutive C2H2-type zinc fingers follow at residues 1091–1113 (YECQ…QDTH), 1147–1169 (YECP…QRVH), 1209–1231 (IRCR…MRQH), and 1266–1289 (FECT…TKVH). The segment at 1317–1339 (YECKDCGQSFLDDTVIAERMVFH) adopts a C2H2-type 10; degenerate zinc-finger fold. The tract at residues 1373–1487 (NAEAAEPEVE…DQEIEVEEPY (115 aa)) is disordered. Composition is skewed to acidic residues over residues 1377-1397 (AEPE…EVEA), 1405-1418 (EGPD…DGEA), and 1431-1485 (DADE…EVEE). 2 C2H2-type zinc fingers span residues 1488-1510 (YNCH…LKSH) and 1547-1569 (FKCD…QNSH).

Belongs to the krueppel C2H2-type zinc-finger protein family. As to quaternary structure, homodimer. Interacts with SIAH1A and SIAH2. Interacts with TRAF2. In terms of tissue distribution, brain, glial cells, neurons, skeletal muscle, uterus and placenta. In the placenta it is found in all trophoblast cells.

It is found in the nucleus. The protein localises to the cytoplasm. Functionally, induces apoptosis in cooperation with SIAH1A. Acts as a mediator between p53/TP53 and BAX in a neuronal death pathway that is activated by DNA damage. Acts synergistically with TRAF2 and inhibits TNF induced apoptosis through activation of NF-kappa-B. Plays a role in regulating maternal behavior and offspring growth. In Mus musculus (Mouse), this protein is Paternally-expressed gene 3 protein (Peg3).